A 363-amino-acid chain; its full sequence is Cytochrome b (363 aa).

Transmembrane regions (helical) follow at residues 23–43, 67–89, 102–122, and 164–184; these read VGFILGILLILQILSGLLLTF, WFVRLYHSVGVSFYFFFMFIHII, SWYSGIVILILSIVIAFTGYV, and FFILHFVLPAVVLVIVLLHLY. Positions 73 and 87 each coordinate heme b. Heme b contacts are provided by histidine 168 and histidine 182. Histidine 187 provides a ligand contact to a ubiquinone. Transmembrane regions (helical) follow at residues 210-230, 271-291, 309-329, and 332-352; these read ILFSDVKFLVIISMFIGPQVG, VFPTKVSGLVAMVVVLKLLII, RVWTTTSVPLVPALFLLGCIG, and VINLDLIIIGIYGVLLSTTFV.

Belongs to the cytochrome b family. As to quaternary structure, the main subunits of complex b-c1 are: cytochrome b, cytochrome c1 and the Rieske protein. Heme b is required as a cofactor.

Its subcellular location is the mitochondrion inner membrane. Functionally, component of the ubiquinol-cytochrome c reductase complex (complex III or cytochrome b-c1 complex) that is part of the mitochondrial respiratory chain. The b-c1 complex mediates electron transfer from ubiquinol to cytochrome c. Contributes to the generation of a proton gradient across the mitochondrial membrane that is then used for ATP synthesis. The protein is Cytochrome b (MT-CYB) of Theileria parva (East coast fever infection agent).